The chain runs to 182 residues: Peptidyl-prolyl cis-trans isomerase H (182 aa).

The region spanning 15–181 (FFDITIGGEP…LDVVISQCGE (167 aa)) is the PPIase cyclophilin-type domain.

The protein belongs to the cyclophilin-type PPIase family. PPIase H subfamily.

The protein resides in the nucleus. It catalyses the reaction [protein]-peptidylproline (omega=180) = [protein]-peptidylproline (omega=0). PPIases accelerate the folding of proteins. It catalyzes the cis-trans isomerization of proline imidic peptide bonds in oligopeptides. In Gibberella zeae (strain ATCC MYA-4620 / CBS 123657 / FGSC 9075 / NRRL 31084 / PH-1) (Wheat head blight fungus), this protein is Peptidyl-prolyl cis-trans isomerase H (CYP3).